Consider the following 150-residue polypeptide: Keratin-associated protein 15-1 (150 aa).

Belongs to the PMG family. In terms of assembly, interacts with hair keratins. As to expression, expressed at high levels in skin and at lower levels in the developing mammary gland.

In terms of biological role, in the hair cortex, hair keratin intermediate filaments are embedded in an interfilamentous matrix, consisting of hair keratin-associated proteins (KRTAP), which are essential for the formation of a rigid and resistant hair shaft through their extensive disulfide bond cross-linking with abundant cysteine residues of hair keratins. The matrix proteins include the high-sulfur and high-glycine-tyrosine keratins. The chain is Keratin-associated protein 15-1 from Mus musculus (Mouse).